The primary structure comprises 177 residues: Nuclear export protein (177 aa).

2 consecutive short sequence motifs (nuclear export signal) follow at residues 91–100 and 117–127; these read LWLPMKSLSL and MKHQILTRLKL.

Binds M1 protein. May interact with human nucleoporins and exportin XPO1/CRM1.

It is found in the virion. It localises to the host nucleus. In terms of biological role, mediates the nuclear export of encapsidated genomic RNAs (ribonucleoproteins, RNPs). Acts as an adapter between viral RNPs complexes and the nuclear export machinery of the cell. Possesses no intrinsic RNA-binding activity, but includes a C-terminal M1-binding domain. This domain is believed to allow recognition of RNPs to which the M1 protein is bound. Because the M1 protein is not available in large quantities until the later stages of infection, such an indirect recognition mechanism probably ensures that genomic RNPs are not exported from the nucleus before sufficient quantities of viral mRNA and progeny genomic RNA have been synthesized. Furthermore, the RNPs enters the cytoplasm only when they have associated with the M1 protein that is necessary to guide them to the plasma membrane. May down-regulate viral RNA synthesis when overproduced. In Homo sapiens (Human), this protein is Nuclear export protein (NS).